The sequence spans 302 residues: Tritrans,polycis-undecaprenyl-diphosphate synthase (geranylgeranyl-diphosphate specific) (302 aa).

D33 is a catalytic residue. D33 contacts Mg(2+). Residues 34–37 (GNRR) and 78–80 (STE) each bind substrate. N81 acts as the Proton acceptor in catalysis. Residues F82, R84, R203, and 209–211 (RTS) each bind substrate.

This sequence belongs to the UPP synthase family. Homodimer. Requires Mg(2+) as cofactor.

It catalyses the reaction geranylgeranyl diphosphate + 7 isopentenyl diphosphate = tri-trans,hepta-cis-undecaprenyl diphosphate + 7 diphosphate. Catalyzes the sequential condensation of isopentenyl diphosphate (IPP) with geranylgeranyl diphosphate (GGPP) to yield (2Z,6Z,10Z,14Z,18Z,22Z,26Z,30E,34E,38E)-undecaprenyl diphosphate (tritrans,heptacis-UPP). It is probably the precursor of glycosyl carrier lipids. The polypeptide is Tritrans,polycis-undecaprenyl-diphosphate synthase (geranylgeranyl-diphosphate specific) (Halobacterium salinarum (strain ATCC 700922 / JCM 11081 / NRC-1) (Halobacterium halobium)).